Consider the following 416-residue polypeptide: Lipid phosphate phosphatase delta (416 aa).

2 helical membrane-spanning segments follow: residues 72 to 92 (FFSG…LPLL) and 104 to 124 (MTLL…VVSA). A phosphatase sequence motif I region spans residues 119–127 (KDVVSAPRP). The segment at 151 to 154 (PSSH) is phosphatase sequence motif II. The active-site Proton donor is H154. The helical transmembrane segment at 178–198 (VSIQYYGFALACLLVALIAFG) threads the bilayer. The interval 198-209 (GRVYLGMHSVVD) is phosphatase sequence motif III. Residue H205 is the Nucleophile of the active site. The next 5 membrane-spanning stretches (helical) occupy residues 207 to 227 (VVDI…WLTV), 241 to 261 (VSSF…TPEH), 266 to 286 (YEYH…VQQT), 302 to 322 (ELPI…ILLV), and 393 to 413 (FFQY…LFSY).

The protein belongs to the type 2 lipid phosphate phosphatase family.

It localises to the endoplasmic reticulum membrane. In terms of biological role, functions as a sphingoid long-chain base phosphate (LCBP) phosphatase. May play a role in the regulation of LCBP levels and be involved in stomatal responses through LCBP-mediated ABA signaling. This is Lipid phosphate phosphatase delta (LPPD) from Arabidopsis thaliana (Mouse-ear cress).